Consider the following 467-residue polypeptide: Retinoic acid receptor RXR-gamma (467 aa).

The modulating stretch occupies residues 1-142 (MYGNYPHFIK…TSPGSLAKHI (142 aa)). 2 NR C4-type zinc fingers span residues 143 to 163 (CAIC…CEGC) and 179 to 203 (CRDN…YQKC). The segment at residues 143-208 (CAICGDRSSG…RYQKCLAMGM (66 aa)) is a DNA-binding region (nuclear receptor). The hinge stretch occupies residues 209-232 (KREAVQEERQGSRERSENEAESTS). Residues 214–226 (QEERQGSRERSEN) show a composition bias toward basic and acidic residues. The segment at 214-237 (QEERQGSRERSENEAESTSGGSED) is disordered. One can recognise an NR LBD domain in the interval 235 to 463 (SEDMPVERIL…TFLMEMLETP (229 aa)).

It belongs to the nuclear hormone receptor family. NR2 subfamily. Homodimer. Heterodimer; with a RAR molecule. Binds DNA preferentially as a RAR/RXR heterodimer. In terms of tissue distribution, isoform 1 is highly expressed inliver. Isoform 2 is abundantly expressed in eye and dorsal root ganglia.

The protein localises to the nucleus. Functionally, receptor for retinoic acid. Retinoic acid receptors bind as heterodimers to their target response elements in response to their ligands, all-trans or 9-cis retinoic acid, and regulate gene expression in various biological processes. The RAR/RXR heterodimers bind to the retinoic acid response elements (RARE) composed of tandem 5'-AGGTCA-3' sites known as DR1-DR5. The high affinity ligand for RXRs is 9-cis retinoic acid. The protein is Retinoic acid receptor RXR-gamma (RXRG) of Gallus gallus (Chicken).